The chain runs to 699 residues: Elongation factor G (699 aa).

The tr-type G domain occupies 8-283 (EHIRNIGICA…AVVDFLPSPI (276 aa)). GTP-binding positions include 17–24 (AHIDAGKT), 81–85 (DTPGH), and 135–138 (NKMD).

The protein belongs to the TRAFAC class translation factor GTPase superfamily. Classic translation factor GTPase family. EF-G/EF-2 subfamily.

The protein localises to the cytoplasm. Functionally, catalyzes the GTP-dependent ribosomal translocation step during translation elongation. During this step, the ribosome changes from the pre-translocational (PRE) to the post-translocational (POST) state as the newly formed A-site-bound peptidyl-tRNA and P-site-bound deacylated tRNA move to the P and E sites, respectively. Catalyzes the coordinated movement of the two tRNA molecules, the mRNA and conformational changes in the ribosome. This chain is Elongation factor G, found in Rickettsia conorii (strain ATCC VR-613 / Malish 7).